The following is a 369-amino-acid chain: Putative 2-aminoethylphosphonate import ATP-binding protein PhnT (369 aa).

An ABC transporter domain is found at 19 to 250 (IVLDSLRVAY…PPNRFAAEFL (232 aa)). 51 to 58 (GPSGSGKT) provides a ligand contact to ATP.

The protein belongs to the ABC transporter superfamily. 2-aminoethylphosphonate importer (TC 3.A.1.11.5) family.

It is found in the cell inner membrane. Functionally, probably part of the PhnSTUV complex (TC 3.A.1.11.5) involved in 2-aminoethylphosphonate import. Probably responsible for energy coupling to the transport system. The chain is Putative 2-aminoethylphosphonate import ATP-binding protein PhnT (phnT) from Salmonella typhimurium (strain LT2 / SGSC1412 / ATCC 700720).